The sequence spans 369 residues: Glutamate 5-kinase (369 aa).

An ATP-binding site is contributed by Lys14. Positions 56, 143, and 155 each coordinate substrate. ATP-binding positions include 175–176 and 215–221; these read SD and TGGMASK. Residues 277–351 form the PUA domain; sequence AGKIRLDDGA…GMQTQDLPDG (75 aa).

Belongs to the glutamate 5-kinase family.

Its subcellular location is the cytoplasm. It carries out the reaction L-glutamate + ATP = L-glutamyl 5-phosphate + ADP. Its pathway is amino-acid biosynthesis; L-proline biosynthesis; L-glutamate 5-semialdehyde from L-glutamate: step 1/2. Catalyzes the transfer of a phosphate group to glutamate to form L-glutamate 5-phosphate. This Corynebacterium glutamicum (strain ATCC 13032 / DSM 20300 / JCM 1318 / BCRC 11384 / CCUG 27702 / LMG 3730 / NBRC 12168 / NCIMB 10025 / NRRL B-2784 / 534) protein is Glutamate 5-kinase.